The chain runs to 66 residues: UPF0391 membrane protein AM1_5042 (66 aa).

A run of 2 helical transmembrane segments spans residues 4 to 24 and 28 to 47; these read LTLTFLVVALIAAFLGFSGIA and AAIAKILFCIFIVCFILVWP.

It belongs to the UPF0391 family.

The protein resides in the cell membrane. This Acaryochloris marina (strain MBIC 11017) protein is UPF0391 membrane protein AM1_5042.